Here is a 338-residue protein sequence, read N- to C-terminus: Large ribosomal subunit protein uL10 (338 aa).

A disordered region spans residues 295–338 (EVPTIQPTTPPEKKEEEEKKEEEEEEAETVSEEELAEGLGALFG). The span at 312–330 (EKKEEEEEEAETVSEEELA) shows a compositional bias: acidic residues.

Belongs to the universal ribosomal protein uL10 family. In terms of assembly, part of the 50S ribosomal subunit. Forms part of the ribosomal stalk which helps the ribosome interact with GTP-bound translation factors. Forms a heptameric L10(L12)2(L12)2(L12)2 complex, where L10 forms an elongated spine to which the L12 dimers bind in a sequential fashion.

In terms of biological role, forms part of the ribosomal stalk, playing a central role in the interaction of the ribosome with GTP-bound translation factors. The sequence is that of Large ribosomal subunit protein uL10 from Staphylothermus marinus (strain ATCC 43588 / DSM 3639 / JCM 9404 / F1).